The following is a 156-amino-acid chain: Cyanate hydratase (156 aa).

Residues Arg-96, Glu-99, and Ser-122 contribute to the active site.

The protein belongs to the cyanase family.

The catalysed reaction is cyanate + hydrogencarbonate + 3 H(+) = NH4(+) + 2 CO2. Catalyzes the reaction of cyanate with bicarbonate to produce ammonia and carbon dioxide. The chain is Cyanate hydratase from Escherichia coli O7:K1 (strain IAI39 / ExPEC).